We begin with the raw amino-acid sequence, 284 residues long: RNase adapter protein RapZ (284 aa).

G8–S15 lines the ATP pocket. D56 to N59 is a GTP binding site. Residues R266–S284 form an RNA-binding region.

It belongs to the RapZ-like family. RapZ subfamily. As to quaternary structure, homotrimer.

In terms of biological role, modulates the synthesis of GlmS, by affecting the processing and stability of the regulatory small RNA GlmZ. When glucosamine-6-phosphate (GlcN6P) concentrations are high in the cell, RapZ binds GlmZ and targets it to cleavage by RNase E. Consequently, GlmZ is inactivated and unable to activate GlmS synthesis. Under low GlcN6P concentrations, RapZ is sequestered and inactivated by an other regulatory small RNA, GlmY, preventing GlmZ degradation and leading to synthesis of GlmS. This chain is RNase adapter protein RapZ, found in Klebsiella pneumoniae (strain 342).